A 980-amino-acid chain; its full sequence is Thrombospondin-4 (980 aa).

The first 42 residues, 1 to 42 (MTMITPSSKLTLTKGNKSWSSTRCGAFLLLHLVLQPWQRAGA), serve as a signal peptide directing secretion. The Laminin G-like domain maps to 43–210 (QATPQVFDLL…LEELKLVVRG (168 aa)). The region spanning 304-343 (PTRRCDSSPCFRGVRCTDTRDGFQCGPCPDGYTGNGITCS) is the EGF-like 1 domain. Intrachain disulfides connect Cys308/Cys319, Cys313/Cys328, Cys331/Cys342, Cys348/Cys359, Cys353/Cys368, Cys371/Cys395, Cys401/Cys412, Cys406/Cys421, Cys424/Cys436, Cys442/Cys456, Cys450/Cys466, Cys468/Cys480, Cys496/Cys501, Cys506/Cys526, Cys542/Cys562, Cys565/Cys585, Cys601/Cys621, Cys624/Cys644, Cys662/Cys682, Cys702/Cys722, and Cys738/Cys959. The EGF-like 2; calcium-binding domain occupies 344–381 (DVDECKYHPCYPGVRCTNLAPGFRCDACPVGFTGPMVQ). Positions 397–434 (DVDECRNGACVLNSICINTLGSYRCGPCKPGYTGDQTR) constitute an EGF-like 3; calcium-binding domain. The EGF-like 4 domain occupies 438–481 (TERSCRNPEQNPCSVHAQCIEERQGDVTCVCGVGWAGRAGYVCG). TSP type-3 repeat units follow at residues 482–514 (KDVDIDSYPDEELPCSARNCKKDNCKYVPNSGQ), 515–550 (EDADRDGIGDACDEDADGDGILNEQDNCVLTHNVDQ), 551–573 (RNTDKDIFGDACDNCRGVLNNDQ), 574–609 (KDTDGDGKGDACDDDMDGDGIKNILDNCPRVPNRDQ), 610–632 (QDRDGDGVGDACDSCPDVSNPNQ), 633–670 (SDVDNDLVGDSCDTNQDSDGDGHQDSTDNCPTVINSAQ), 671–710 (LDTDKDGIGDECDDDDDNDGMPDLFPPGPDNCRLVPNPAQ), and 711–746 (EDSNNDGVGDICEADFDQDKVIDRIDVCPENAEITL). The disordered stretch occupies residues 596–691 (NILDNCPRVP…CDDDDDNDGM (96 aa)). Residues 605 to 615 (PNRDQQDRDGD) are compositionally biased toward basic and acidic residues. N-linked (GlcNAc...) asparagine glycosylation is present at Asn631. Residues 659 to 671 (TDNCPTVINSAQL) are compositionally biased toward polar residues. Residues 679-690 (GDECDDDDDNDG) show a composition bias toward acidic residues. Residues 750–964 (RAYQTVVLDP…LKYRCNDTIP (215 aa)) enclose the TSP C-terminal domain. N-linked (GlcNAc...) asparagine glycosylation occurs at Asn960.

This sequence belongs to the thrombospondin family. In terms of assembly, homopentamer; disulfide-linked. Interacts with PTBP3. Interacts (via EGF-like 3; calcium-binding domain) with ATF6 and facilitates its processing, activation and nuclear translocation. Interacts with NOTCH1. As to expression, mainly expressed in astrocytes, and in ressponse to peripheral nerve injury, significantly up-regulated in the dorsal spinal cord (at protein level).

The protein resides in the endoplasmic reticulum. It is found in the sarcoplasmic reticulum. Its subcellular location is the secreted. The protein localises to the extracellular space. It localises to the extracellular matrix. In terms of biological role, adhesive glycoprotein that mediates cell-to-cell and cell-to-matrix interactions and is involved in various processes including cellular proliferation, migration, adhesion and attachment, inflammatory response to CNS injury, regulation of vascular inflammation and adaptive responses of the heart to pressure overload and in myocardial function and remodeling. Binds to structural extracellular matrix (ECM) proteins and modulates the ECM in response to tissue damage, contributing to cardioprotective and adaptive ECM remodeling. Plays a role in ER stress response, via its interaction with the activating transcription factor 6 alpha (ATF6) which produces adaptive ER stress response factors and protects myocardium from pressure overload. May contribute to spinal presynaptic hypersensitivity and neuropathic pain states after peripheral nerve injury. May play a role in regulating protective astrogenesis from the subventricular zone (SVZ) niche after injury in a NOTCH1-dependent manner. The protein is Thrombospondin-4 (Thbs4) of Rattus norvegicus (Rat).